Consider the following 350-residue polypeptide: DNA polymerase IV (350 aa).

One can recognise a UmuC domain in the interval 6-187 (IIHIDMDAFY…LPVEKIFGIG (182 aa)). Residues D10 and D105 each contribute to the Mg(2+) site. E106 is an active-site residue.

Belongs to the DNA polymerase type-Y family. Monomer. It depends on Mg(2+) as a cofactor.

The protein resides in the cytoplasm. The enzyme catalyses DNA(n) + a 2'-deoxyribonucleoside 5'-triphosphate = DNA(n+1) + diphosphate. In terms of biological role, poorly processive, error-prone DNA polymerase involved in untargeted mutagenesis. Copies undamaged DNA at stalled replication forks, which arise in vivo from mismatched or misaligned primer ends. These misaligned primers can be extended by PolIV. Exhibits no 3'-5' exonuclease (proofreading) activity. May be involved in translesional synthesis, in conjunction with the beta clamp from PolIII. In Protochlamydia amoebophila (strain UWE25), this protein is DNA polymerase IV.